The primary structure comprises 416 residues: Subtilisin-like protease 12 (416 aa).

An N-terminal signal peptide occupies residues 1-19 (MSILKMMLIYFAIFWVVNA). The propeptide occupies 20–116 (AQLLDIDSQG…VEPNKEMQVA (97 aa)). An Inhibitor I9 domain is found at 35 to 115 (YIVVMKDRVS…FVEPNKEMQV (81 aa)). N-linked (GlcNAc...) asparagine glycans are attached at residues Asn-123, Asn-136, and Asn-150. The 292-residue stretch at 125–416 (TWGLSRISHK…NKLLYNGSGA (292 aa)) folds into the Peptidase S8 domain. Active-site charge relay system residues include Asp-157 and His-188. N-linked (GlcNAc...) asparagine glycosylation is found at Asn-249, Asn-305, Asn-334, and Asn-353. Residue Ser-362 is the Charge relay system of the active site. Residues Asn-404 and Asn-412 are each glycosylated (N-linked (GlcNAc...) asparagine).

It belongs to the peptidase S8 family.

It localises to the secreted. Functionally, secreted subtilisin-like serine protease with keratinolytic activity that contributes to pathogenicity. This chain is Subtilisin-like protease 12 (SUB12), found in Arthroderma benhamiae (strain ATCC MYA-4681 / CBS 112371) (Trichophyton mentagrophytes).